Here is a 577-residue protein sequence, read N- to C-terminus: BICD family-like cargo adapter 1 (577 aa).

The disordered stretch occupies residues leucine 63 to proline 100. Residues arginine 69–alanine 79 show a composition bias toward basic and acidic residues. The CC1 box signature appears at alanine 116–glycine 120. Positions lysine 121–arginine 379 form a coiled coil. Positions aspartate 389–alanine 415 are disordered. The span at serine 390 to serine 399 shows a compositional bias: low complexity. A coiled-coil region spans residues leucine 443–arginine 528.

The protein belongs to the BICDR family. As to quaternary structure, part of a tripartite complex with dynein and dynactin, acts an adapter linking the dynein motor complex and dynactin. Interacts with KIF1C. Interacts with RAB6A and RAB6B; interaction is specific to Rab6. In terms of tissue distribution, highly expressed during early embryonic development. Predominantly expressed in kidney, undifferentiated neural tissue and developing eye.

The protein localises to the cytoplasm. The protein resides in the cytoskeleton. Its subcellular location is the microtubule organizing center. It localises to the centrosome. Its function is as follows. Acts as an adapter protein linking the dynein motor complex to various cargos and converts dynein from a non-processive to a highly processive motor in the presence of dynactin. Facilitates the interaction between dynein and dynactin and activates dynein processivity (the ability to move along a microtubule for a long distance without falling off the track). Predominantly recruits 2 dyneins, which increases both the force and speed of the microtubule motor. Component of secretory vesicle machinery in developing neurons that acts as a regulator of neurite outgrowth. Regulates the secretory vesicle transport by controlling the accumulation of Rab6-containing secretory vesicles in the pericentrosomal region restricting anterograde secretory transport during the early phase of neuronal differentiation, thereby inhibiting neuritogenesis. The polypeptide is BICD family-like cargo adapter 1 (Bicdl1) (Mus musculus (Mouse)).